Consider the following 201-residue polypeptide: Peptide deformylase (201 aa).

Residues M1–P17 show a composition bias toward polar residues. Positions M1 to E24 are disordered. Positions 121 and 163 each coordinate Fe cation. E164 is a catalytic residue. H167 lines the Fe cation pocket.

Belongs to the polypeptide deformylase family. It depends on Fe(2+) as a cofactor.

It carries out the reaction N-terminal N-formyl-L-methionyl-[peptide] + H2O = N-terminal L-methionyl-[peptide] + formate. Removes the formyl group from the N-terminal Met of newly synthesized proteins. Requires at least a dipeptide for an efficient rate of reaction. N-terminal L-methionine is a prerequisite for activity but the enzyme has broad specificity at other positions. The protein is Peptide deformylase of Prochlorococcus marinus subsp. pastoris (strain CCMP1986 / NIES-2087 / MED4).